Reading from the N-terminus, the 1381-residue chain is DNA-directed RNA polymerase subunit beta'' (1381 aa).

Residues cysteine 224, cysteine 296, cysteine 303, and cysteine 306 each coordinate Zn(2+).

This sequence belongs to the RNA polymerase beta' chain family. RpoC2 subfamily. In terms of assembly, in plastids the minimal PEP RNA polymerase catalytic core is composed of four subunits: alpha, beta, beta', and beta''. When a (nuclear-encoded) sigma factor is associated with the core the holoenzyme is formed, which can initiate transcription. Zn(2+) is required as a cofactor.

The protein resides in the plastid. It is found in the chloroplast. The catalysed reaction is RNA(n) + a ribonucleoside 5'-triphosphate = RNA(n+1) + diphosphate. Functionally, DNA-dependent RNA polymerase catalyzes the transcription of DNA into RNA using the four ribonucleoside triphosphates as substrates. The sequence is that of DNA-directed RNA polymerase subunit beta'' from Drimys granadensis.